The following is a 320-amino-acid chain: Ferrochelatase (320 aa).

Residues H194 and E275 each contribute to the Fe cation site.

This sequence belongs to the ferrochelatase family.

It localises to the cytoplasm. The catalysed reaction is heme b + 2 H(+) = protoporphyrin IX + Fe(2+). The protein operates within porphyrin-containing compound metabolism; protoheme biosynthesis; protoheme from protoporphyrin-IX: step 1/1. Functionally, catalyzes the ferrous insertion into protoporphyrin IX. The polypeptide is Ferrochelatase (Serratia proteamaculans (strain 568)).